The sequence spans 342 residues: Protein pelota homolog (342 aa).

This sequence belongs to the eukaryotic release factor 1 family. Pelota subfamily. As to quaternary structure, monomer. The cofactor is a divalent metal cation.

It is found in the cytoplasm. May function in recognizing stalled ribosomes, interact with stem-loop structures in stalled mRNA molecules, and effect endonucleolytic cleavage of the mRNA. May play a role in the release non-functional ribosomes and degradation of damaged mRNAs. Has endoribonuclease activity. The polypeptide is Protein pelota homolog (Methanocorpusculum labreanum (strain ATCC 43576 / DSM 4855 / Z)).